A 1236-amino-acid chain; its full sequence is DNA-directed RNA polymerase subunit beta (1236 aa).

The segment at P1193–I1212 is disordered. The span at D1194–I1212 shows a compositional bias: acidic residues.

It belongs to the RNA polymerase beta chain family. The RNAP catalytic core consists of 2 alpha, 1 beta, 1 beta' and 1 omega subunit. When a sigma factor is associated with the core the holoenzyme is formed, which can initiate transcription.

It catalyses the reaction RNA(n) + a ribonucleoside 5'-triphosphate = RNA(n+1) + diphosphate. Functionally, DNA-dependent RNA polymerase catalyzes the transcription of DNA into RNA using the four ribonucleoside triphosphates as substrates. This is DNA-directed RNA polymerase subunit beta from Clostridium beijerinckii (strain ATCC 51743 / NCIMB 8052) (Clostridium acetobutylicum).